Reading from the N-terminus, the 659-residue chain is Threonine--tRNA ligase (659 aa).

One can recognise a TGS domain in the interval 1–60 (MTVYLPDGKPLELPEGATAKDVARALGEGWERRAVGAIVDGELYDLLKPLPQGAKVRLLT). Catalytic regions lie at residues 234–548 (TAEE…EHFA) and 252–552 (DHRR…GDFP). Cys-349, His-400, and His-529 together coordinate Zn(2+).

Belongs to the class-II aminoacyl-tRNA synthetase family. In terms of assembly, homodimer. Requires Zn(2+) as cofactor.

The protein resides in the cytoplasm. The enzyme catalyses tRNA(Thr) + L-threonine + ATP = L-threonyl-tRNA(Thr) + AMP + diphosphate + H(+). In terms of biological role, catalyzes the attachment of threonine to tRNA(Thr) in a two-step reaction: L-threonine is first activated by ATP to form Thr-AMP and then transferred to the acceptor end of tRNA(Thr). Also edits incorrectly charged L-seryl-tRNA(Thr). The sequence is that of Threonine--tRNA ligase from Thermus thermophilus (strain ATCC 27634 / DSM 579 / HB8).